A 323-amino-acid polypeptide reads, in one-letter code: Sphingolipid delta(4)-desaturase DES1 (323 aa).

The next 2 helical transmembrane spans lie at 41 to 61 (YNLI…FYLV) and 68 to 88 (WVVF…TLAI). The short motif at 89 to 93 (HEISH) is the Histidine box-1 element. Residues 102–122 (AMWNRWFGIFANLPLGLPYSI) form a helical membrane-spanning segment. The Histidine box-2 signature appears at 128 to 132 (HMDHH). 3 helical membrane-spanning segments follow: residues 159-179 (KFIW…CINP), 185-205 (LEII…YLWG), and 209-229 (IFYM…SGHF). The Histidine box-3 signature appears at 259–263 (HNEHH).

This sequence belongs to the fatty acid desaturase type 1 family. DEGS subfamily. As to quaternary structure, interacts with RLBP1; the interaction increases synthesis of chromophore-precursors by DEGS1. Expressed in retina and retinal pigment epithelium by Mueller cells (at protein level).

It is found in the endoplasmic reticulum membrane. It carries out the reaction an N-acylsphinganine + 2 Fe(II)-[cytochrome b5] + O2 + 2 H(+) = an N-acylsphing-4-enine + 2 Fe(III)-[cytochrome b5] + 2 H2O. It catalyses the reaction all-trans-retinol = 11-cis-retinol. The catalysed reaction is all-trans-retinol = 9-cis-retinol. The enzyme catalyses all-trans-retinol = 13-cis-retinol. It carries out the reaction 11-cis-retinol = 13-cis-retinol. It catalyses the reaction 11-cis-retinol = 9-cis-retinol. In terms of biological role, has sphingolipid-delta-4-desaturase activity. Converts D-erythro-sphinganine to D-erythro-sphingosine (E-sphing-4-enine). Catalyzes the equilibrium isomerization of retinols. The sequence is that of Sphingolipid delta(4)-desaturase DES1 (DEGS1) from Gallus gallus (Chicken).